The chain runs to 82 residues: Large ribosomal subunit protein bL31B (82 aa).

This sequence belongs to the bacterial ribosomal protein bL31 family. Type B subfamily. In terms of assembly, part of the 50S ribosomal subunit.

The polypeptide is Large ribosomal subunit protein bL31B (Proteus mirabilis (strain HI4320)).